A 333-amino-acid polypeptide reads, in one-letter code: Holliday junction branch migration complex subunit RuvB (333 aa).

The tract at residues 1–182 (MEERIVSAEA…FGVMARLEYY (182 aa)) is large ATPase domain (RuvB-L). ATP contacts are provided by residues L21, R22, G63, K66, T67, T68, 129–131 (EDF), R172, Y182, and R219. Residue T67 coordinates Mg(2+). Residues 183–253 (KPEELAQIVE…RACSALEQLH (71 aa)) form a small ATPAse domain (RuvB-S) region. Residues 256–333 (PLGLDHIDDK…AHYGVEKQNG (78 aa)) form a head domain (RuvB-H) region. Residues R311 and R316 each contribute to the DNA site.

The protein belongs to the RuvB family. As to quaternary structure, homohexamer. Forms an RuvA(8)-RuvB(12)-Holliday junction (HJ) complex. HJ DNA is sandwiched between 2 RuvA tetramers; dsDNA enters through RuvA and exits via RuvB. An RuvB hexamer assembles on each DNA strand where it exits the tetramer. Each RuvB hexamer is contacted by two RuvA subunits (via domain III) on 2 adjacent RuvB subunits; this complex drives branch migration. In the full resolvosome a probable DNA-RuvA(4)-RuvB(12)-RuvC(2) complex forms which resolves the HJ.

It is found in the cytoplasm. It carries out the reaction ATP + H2O = ADP + phosphate + H(+). Its function is as follows. The RuvA-RuvB-RuvC complex processes Holliday junction (HJ) DNA during genetic recombination and DNA repair, while the RuvA-RuvB complex plays an important role in the rescue of blocked DNA replication forks via replication fork reversal (RFR). RuvA specifically binds to HJ cruciform DNA, conferring on it an open structure. The RuvB hexamer acts as an ATP-dependent pump, pulling dsDNA into and through the RuvAB complex. RuvB forms 2 homohexamers on either side of HJ DNA bound by 1 or 2 RuvA tetramers; 4 subunits per hexamer contact DNA at a time. Coordinated motions by a converter formed by DNA-disengaged RuvB subunits stimulates ATP hydrolysis and nucleotide exchange. Immobilization of the converter enables RuvB to convert the ATP-contained energy into a lever motion, pulling 2 nucleotides of DNA out of the RuvA tetramer per ATP hydrolyzed, thus driving DNA branch migration. The RuvB motors rotate together with the DNA substrate, which together with the progressing nucleotide cycle form the mechanistic basis for DNA recombination by continuous HJ branch migration. Branch migration allows RuvC to scan DNA until it finds its consensus sequence, where it cleaves and resolves cruciform DNA. In Shouchella clausii (strain KSM-K16) (Alkalihalobacillus clausii), this protein is Holliday junction branch migration complex subunit RuvB.